Here is a 331-residue protein sequence, read N- to C-terminus: Pyruvate synthase subunit PorB (331 aa).

Residues Cys-21, Cys-24, Cys-59, and Cys-222 each contribute to the [4Fe-4S] cluster site.

As to quaternary structure, heterotetramer of one alpha, one beta, one delta and one gamma chain. [4Fe-4S] cluster serves as cofactor.

The enzyme catalyses 2 oxidized [2Fe-2S]-[ferredoxin] + pyruvate + CoA = 2 reduced [2Fe-2S]-[ferredoxin] + acetyl-CoA + CO2 + H(+). The chain is Pyruvate synthase subunit PorB (porB) from Pyrococcus horikoshii (strain ATCC 700860 / DSM 12428 / JCM 9974 / NBRC 100139 / OT-3).